We begin with the raw amino-acid sequence, 482 residues long: Phenylalanine--tRNA ligase alpha subunit (482 aa).

L-phenylalanine is bound by residues Thr327, 366-368, and Tyr406; that span reads QIE. Glu408 serves as a coordination point for Mg(2+). Phe430 is an L-phenylalanine binding site.

Belongs to the class-II aminoacyl-tRNA synthetase family. Phe-tRNA synthetase alpha subunit type 2 subfamily. As to quaternary structure, tetramer of two alpha and two beta subunits. Mg(2+) is required as a cofactor.

The protein localises to the cytoplasm. It carries out the reaction tRNA(Phe) + L-phenylalanine + ATP = L-phenylalanyl-tRNA(Phe) + AMP + diphosphate + H(+). The sequence is that of Phenylalanine--tRNA ligase alpha subunit from Thermoplasma volcanium (strain ATCC 51530 / DSM 4299 / JCM 9571 / NBRC 15438 / GSS1).